A 407-amino-acid chain; its full sequence is Glucan 1,3-beta-glucosidase 1 (407 aa).

Positions 1–22 (MLSFTSVFSFFLHALLLKTAFS) are cleaved as a signal peptide. The active-site Proton donor is the E213. Residues C295 and C406 are joined by a disulfide bond. The active-site Nucleophile is the E312.

It belongs to the glycosyl hydrolase 5 (cellulase A) family.

It localises to the secreted. The catalysed reaction is Successive hydrolysis of beta-D-glucose units from the non-reducing ends of (1-&gt;3)-beta-D-glucans, releasing alpha-glucose.. Its function is as follows. Beta-glucanases participate in the metabolism of beta-glucan, the main structural component of the cell wall. It could also function biosynthetically as a transglycosylase. The sequence is that of Glucan 1,3-beta-glucosidase 1 (exg1) from Schizosaccharomyces pombe (strain 972 / ATCC 24843) (Fission yeast).